Consider the following 223-residue polypeptide: GTP cyclohydrolase 1 (223 aa).

Residues C114, H117, and C185 each contribute to the Zn(2+) site.

The protein belongs to the GTP cyclohydrolase I family. Homomer.

The enzyme catalyses GTP + H2O = 7,8-dihydroneopterin 3'-triphosphate + formate + H(+). It participates in cofactor biosynthesis; 7,8-dihydroneopterin triphosphate biosynthesis; 7,8-dihydroneopterin triphosphate from GTP: step 1/1. This Chlorobium phaeovibrioides (strain DSM 265 / 1930) (Prosthecochloris vibrioformis (strain DSM 265)) protein is GTP cyclohydrolase 1.